The following is a 490-amino-acid chain: Protein LMBR1L (490 aa).

Over 1–21 (MEAPDYEVLSVREQLFHERIR) the chain is Extracellular. Positions 1–59 (MEAPDYEVLSVREQLFHERIRECIISTLLFATLYILCHIFLTRFKKPAEFTTVDDEDAT) are interaction with LGB. Residues 1-76 (MEAPDYEVLS…LCTFTLAIAL (76 aa)) are LCN1-binding. The helical transmembrane segment at 22–42 (ECIISTLLFATLYILCHIFLT) threads the bilayer. Residues 43–66 (RFKKPAEFTTVDDEDATVNKIALE) are Cytoplasmic-facing. The chain crosses the membrane as a helical span at residues 67-87 (LCTFTLAIALGAVLLLPFSII). Topologically, residues 88-114 (SNEVLLSLPRNYYIQWLNGSLIHGLWN) are extracellular. The chain crosses the membrane as a helical span at residues 115 to 135 (LVFLFSNLSLIFLMPFAYFFT). At 136-154 (ESEGFAGSRRGVLGRVYET) the chain is on the cytoplasmic side. Residues 155–175 (VVMLMLLTLLVLGMVWVASAI) form a helical membrane-spanning segment. Over 176 to 196 (LDNNKASRESLYDFWEYYLPY) the chain is Extracellular. Residues 197–217 (LYSCISFLGVLLLLVCTPLGL) traverse the membrane as a helical segment. The Cytoplasmic portion of the chain corresponds to 218-305 (ARMFSVTGKL…NLGYPLAMLC (88 aa)). The chain crosses the membrane as a helical span at residues 306–326 (LLVLTGLSVLIVAIHILELLI). The Extracellular portion of the chain corresponds to 327 to 350 (DEAAMPRGMQDASLGQVSFSRLGS). The helical transmembrane segment at 351 to 371 (FGAVIQVALIFYLMVSSVVGF) threads the bilayer. Topologically, residues 372–388 (YSSPLFRSLRPRWHDTA) are cytoplasmic. The chain crosses the membrane as a helical span at residues 389–409 (MTQIIGNCVCLLVLSSALPVF). Residues 410-431 (SRTLGLTRFDLLGDFGRFNWLG) lie on the Extracellular side of the membrane. The helical transmembrane segment at 432-452 (NFYIVFLYNAAFAGLTTLCLV) threads the bilayer. The Cytoplasmic segment spans residues 453-490 (KTFTAAVRAELIRAFGLDRLPLPVSGFPPRASRKTQHQ).

This sequence belongs to the LIMR family. As to quaternary structure, dimer. Can also form higher oligomers. Interacts with LCN1; this interaction mediates the endocytosis of LCN1. Interacts with UBAC2, FAF2, VCP, AMFR, ZNRF3, CTNNB1, LRP6, GSK3A, GSK3B, FZD6, DVL2 and RNF43. Interaction with LGB and SCGB1A1 is controversial.

It is found in the cell membrane. The protein resides in the endoplasmic reticulum membrane. Its function is as follows. Plays an essential role in lymphocyte development by negatively regulating the canonical Wnt signaling pathway. In association with UBAC2 and E3 ubiquitin-protein ligase AMFR, promotes the ubiquitin-mediated degradation of CTNNB1 and Wnt receptors FZD6 and LRP6. LMBR1L stabilizes the beta-catenin destruction complex that is required for regulating CTNNB1 levels. Acts as a LCN1 receptor and can mediate its endocytosis. The sequence is that of Protein LMBR1L (LMBR1L) from Pongo abelii (Sumatran orangutan).